The chain runs to 63 residues: uncharacterized protein (63 aa).

Basic and acidic residues predominate over residues 1–17 (MRYTDSRKLTPETDANH). The segment at 1–32 (MRYTDSRKLTPETDANHKTASPQPIRRISSQT) is disordered. A compositionally biased stretch (polar residues) spans 18–32 (KTASPQPIRRISSQT).

To Y.enterocolitica HemP.

This is an uncharacterized protein from Escherichia coli (strain K12).